Here is a 161-residue protein sequence, read N- to C-terminus: Allophycocyanin beta chain (161 aa).

N71 carries the post-translational modification N4-methylasparagine. C81 contacts (2R,3E)-phycocyanobilin.

The protein belongs to the phycobiliprotein family. In terms of assembly, heterodimer of an alpha and a beta chain. In terms of processing, contains one covalently linked phycocyanobilin chromophore.

The protein localises to the cellular thylakoid membrane. Functionally, light-harvesting photosynthetic bile pigment-protein from the phycobiliprotein complex. Allophycocyanin has a maximum absorption at approximately 650 nanometers. The sequence is that of Allophycocyanin beta chain (apcB) from Synechocystis sp. (strain ATCC 27184 / PCC 6803 / Kazusa).